Here is a 46-residue protein sequence, read N- to C-terminus: Major urinary protein (46 aa).

Asn-15 carries N-linked (GlcNAc...) asparagine glycosylation.

Belongs to the calycin superfamily. Lipocalin family. In terms of tissue distribution, found in many tissues including liver, urine, preputial gland, clitoral gland, submandibular gland and salivary gland.

Its subcellular location is the secreted. Functionally, binds pheromones that are released from drying urine of males. These pheromones affect the sexual behavior of females. Acts as a shuttle for pheromonal communication between individuals of the same species. This chain is Major urinary protein, found in Rattus rattus (Black rat).